The chain runs to 255 residues: uncharacterized protein (255 aa).

It belongs to the methyltransferase superfamily.

This is an uncharacterized protein from Mycobacterium ulcerans (strain Agy99).